Reading from the N-terminus, the 413-residue chain is Probable protein S-acyltransferase 3 (413 aa).

A run of 2 helical transmembrane segments spans residues 65–85 (LTSF…LVWI) and 96–116 (VLAS…LTSA). The 51-residue stretch at 171-221 (KFCDTCLLYRPPRASHCSICNNCVQRFDHHCPWVGQCIARRNYPFFICFIS) folds into the DHHC domain. Residue C201 is the S-palmitoyl cysteine intermediate of the active site. Helical transmembrane passes span 216–236 (FICF…FSWI) and 255–275 (SVIL…LTIF). Residues 364–413 (RDSPRKLPLPTRNLDDIKDISDNYDRSTTTREDASDRDPSFFSSQLDLPK) form a disordered region. Residues 376–402 (NLDDIKDISDNYDRSTTTREDASDRDP) show a composition bias toward basic and acidic residues. The span at 404 to 413 (FFSSQLDLPK) shows a compositional bias: polar residues.

It belongs to the DHHC palmitoyltransferase family. Expressed in flowers and pollen.

Its subcellular location is the endoplasmic reticulum membrane. The protein localises to the cytoplasmic vesicle membrane. It carries out the reaction L-cysteinyl-[protein] + hexadecanoyl-CoA = S-hexadecanoyl-L-cysteinyl-[protein] + CoA. Functionally, palmitoyl acyltransferase. This chain is Probable protein S-acyltransferase 3 (PAT03), found in Arabidopsis thaliana (Mouse-ear cress).